Consider the following 541-residue polypeptide: MGLLFKQPEGTAGKAWPAILISGFVAFGGILFGYDTGTISGILAMPYWARTFSTGYRDSTGQLNVTSSQSSAIVSILSAGTFFGALGASPMGDIIGRRWGLIASNGIFVLGVVLQTIATSIPPFLAGRFFAGLGVGLISALVPLYQSETAPKWIRGFIVGAYQFAITVGLLLASVLNNATHHRNDSGSYRIPIAVQFAWSIILVGGMLILPETPRYLVKKDNIQAAARSLSKLRRLPEDHAAIREELAEIQANHSFEMSLGRSGYMECFQGNLLKRLVTGCLLQALQQLSGINFIMYYGTQFFKNSGFQNEFVITLITNCVNVGSTLPGLYAIDKWGRRPVLLTGAIGMAVSQLLVAVLGTTTTGQDSRGNIIVHDAAAQKAAIAFICLYIFFFAASWGPSAWVITGEIFPLKTRAKSLSMTTATNWLLNWALSFSTPYLVNYGDGNANLQSKIFFIWFGCCFLCIGFVHFMIYETKGLTLEEVDELYMEVDSARDSVKWQPRGVARGEKEAHGAETDFAVETAKGASEQQEVIGDAGRSL.

Residues 15–35 form a helical membrane-spanning segment; sequence AWPAILISGFVAFGGILFGYD. Asn-64 carries an N-linked (GlcNAc...) asparagine glycan. 4 consecutive transmembrane segments (helical) span residues 72-92, 106-126, 129-149, and 156-176; these read AIVS…SPMG, GIFV…PFLA, FFAG…QSET, and GFIV…ASVL. Asn-178 and Asn-184 each carry an N-linked (GlcNAc...) asparagine glycan. Residues 191–211 form a helical membrane-spanning segment; it reads IPIAVQFAWSIILVGGMLILP. An N-linked (GlcNAc...) asparagine glycan is attached at Asn-253. 6 helical membrane passes run 277–297, 313–333, 340–360, 384–404, 418–440, and 454–474; these read LVTG…FIMY, VITL…LYAI, PVLL…AVLG, IAFI…SAWV, SLSM…TPYL, and IFFI…FMIY.

It belongs to the major facilitator superfamily. Sugar transporter (TC 2.A.1.1) family.

Its subcellular location is the membrane. In Aspergillus rugulosus (Emericella rugulosa), this protein is Major facilitator-type transporter ecdD.